A 357-amino-acid chain; its full sequence is MAAPVQTIDVLLAEHADLERALADPELHSRPDEARKAGRRFARLAPIVATYRKLVAAREDLETAHELAATDESFAAEAAELEARVAELDSQLTDMLAPRDPHDADDIVLEVKSGEGGEESALFAADLARMYIRYAERHGWTVTVLGETTSDLGGYKDATLAIASKGDTADGVWSRMKFEGGVHRVQRVPVTESQGRVHTSAAGVLVYPEPEEVGEVQIDESDLRIDVYRSSGKGGQGVNTTDSAVRITHLPTGIVVTCQNERSQLQNKIRAMQVLGARLQAIAEEQAMADASADRASQIRTVDRSERIRTYNFPENRITDHRIGYKSHNLDQVLDGDLDALFDALAAADKQARLQQP.

Position 236 is an N5-methylglutamine (Q236).

This sequence belongs to the prokaryotic/mitochondrial release factor family. Methylated by PrmC. Methylation increases the termination efficiency of RF1.

It is found in the cytoplasm. Its function is as follows. Peptide chain release factor 1 directs the termination of translation in response to the peptide chain termination codons UAG and UAA. The protein is Peptide chain release factor 1 of Mycobacterium marinum (strain ATCC BAA-535 / M).